Here is a 267-residue protein sequence, read N- to C-terminus: 4-hydroxy-tetrahydrodipicolinate reductase (267 aa).

NAD(+)-binding positions include 12 to 17, Asp38, 100 to 102, and 126 to 129; these read GARGRM, GTT, and APNF. The Proton donor/acceptor role is filled by His156. His157 is a binding site for (S)-2,3,4,5-tetrahydrodipicolinate. Lys160 functions as the Proton donor in the catalytic mechanism. 166–167 is a (S)-2,3,4,5-tetrahydrodipicolinate binding site; the sequence is GT.

It belongs to the DapB family.

It is found in the cytoplasm. It catalyses the reaction (S)-2,3,4,5-tetrahydrodipicolinate + NAD(+) + H2O = (2S,4S)-4-hydroxy-2,3,4,5-tetrahydrodipicolinate + NADH + H(+). The catalysed reaction is (S)-2,3,4,5-tetrahydrodipicolinate + NADP(+) + H2O = (2S,4S)-4-hydroxy-2,3,4,5-tetrahydrodipicolinate + NADPH + H(+). It functions in the pathway amino-acid biosynthesis; L-lysine biosynthesis via DAP pathway; (S)-tetrahydrodipicolinate from L-aspartate: step 4/4. Catalyzes the conversion of 4-hydroxy-tetrahydrodipicolinate (HTPA) to tetrahydrodipicolinate. This chain is 4-hydroxy-tetrahydrodipicolinate reductase, found in Bacillus pumilus (strain SAFR-032).